The chain runs to 412 residues: Cysteate synthase (412 aa).

An N6-(pyridoxal phosphate)lysine modification is found at Lys-105. Pyridoxal 5'-phosphate-binding residues include Asn-131 and Thr-382.

This sequence belongs to the threonine synthase family. Cysteate synthase subfamily. Homotrimer. Pyridoxal 5'-phosphate is required as a cofactor.

The enzyme catalyses O-phospho-L-serine + sulfite + H(+) = L-cysteate + phosphate. The protein operates within cofactor biosynthesis; coenzyme M biosynthesis. Specifically catalyzes the beta-elimination of phosphate from L-phosphoserine and the beta-addition of sulfite to the dehydroalanine intermediate to produce L-cysteate. This is Cysteate synthase from Methanocorpusculum labreanum (strain ATCC 43576 / DSM 4855 / Z).